Reading from the N-terminus, the 249-residue chain is Isoprenyl transferase (249 aa).

Aspartate 25 is an active-site residue. Aspartate 25 contacts Mg(2+). Residues 26–29, tryptophan 30, arginine 38, histidine 42, and 70–72 each bind substrate; these read GNGR and STE. Asparagine 73 acts as the Proton acceptor in catalysis. Substrate-binding positions include tryptophan 74, arginine 76, arginine 197, and 203–205; that span reads RLS. Glutamate 216 is a Mg(2+) binding site.

It belongs to the UPP synthase family. Homodimer. The cofactor is Mg(2+).

Functionally, catalyzes the condensation of isopentenyl diphosphate (IPP) with allylic pyrophosphates generating different type of terpenoids. The protein is Isoprenyl transferase of Streptococcus pyogenes serotype M6 (strain ATCC BAA-946 / MGAS10394).